The primary structure comprises 519 residues: Cytochrome P450 709B1 (519 aa).

Residues 1–21 (MGLVIFLALIVLILIIGLRIF) form a helical membrane-spanning segment. Cys-464 serves as a coordination point for heme.

The protein belongs to the cytochrome P450 family. It depends on heme as a cofactor. In terms of tissue distribution, highly expressed in siliques.

It is found in the membrane. Involved in stress response. Does not function as cytokinin hydroxylase in yeast heterologous system. In Arabidopsis thaliana (Mouse-ear cress), this protein is Cytochrome P450 709B1.